The primary structure comprises 164 residues: Kunitz-type serine protease inhibitor BbKI (164 aa).

This sequence belongs to the protease inhibitor I3 (leguminous Kunitz-type inhibitor) family. In terms of assembly, monomer.

It is found in the secreted. In terms of biological role, inhibits bovine trypsin, human plasma kallikrein and plasmin and weakly bovine chymotrypsin. The polypeptide is Kunitz-type serine protease inhibitor BbKI (Bauhinia bauhinioides (Perlebia bauhinoides)).